Reading from the N-terminus, the 296-residue chain is Protoheme IX farnesyltransferase (296 aa).

The Cytoplasmic segment spans residues 1 to 9 (MMFKQYLQV). A helical transmembrane segment spans residues 10–28 (TKPGIIFGNLISVIGGFLL). The Periplasmic segment spans residues 29–37 (ASKGSIDYP). The chain crosses the membrane as a helical span at residues 38-56 (LFIYTLVGVSLVVASGCVF). Residues 57–78 (NNYIDRDIDRKMERTKNRVLVK) lie on the Cytoplasmic side of the membrane. A helical transmembrane segment spans residues 79-97 (GLISPAVSLVYATLLGIAG). At 98–107 (FMLLWFGANP) the chain is on the periplasmic side. The chain crosses the membrane as a helical span at residues 108 to 126 (LACWLGVMGFVVYVGVYSL). Residues 127 to 197 (YMKRHSVYGT…YQAANIPVLP (71 aa)) lie on the Cytoplasmic side of the membrane. The chain crosses the membrane as a helical span at residues 198–216 (VVKGISVAKNHITLYIIAF). The Periplasmic segment spans residues 217–228 (AVATLMLSLGGY). A helical transmembrane segment spans residues 229–247 (AGYKYLVVAAAVSVWWLGM). Over 248 to 268 (ALRGYKVADDRIWARKLFGFS) the chain is Cytoplasmic. Residues 269–287 (IIAITALSVMMSVDFMVPD) traverse the membrane as a helical segment. At 288-296 (SHTLLAAVW) the chain is on the periplasmic side.

Belongs to the UbiA prenyltransferase family. Protoheme IX farnesyltransferase subfamily.

Its subcellular location is the cell inner membrane. The enzyme catalyses heme b + (2E,6E)-farnesyl diphosphate + H2O = Fe(II)-heme o + diphosphate. It participates in porphyrin-containing compound metabolism; heme O biosynthesis; heme O from protoheme: step 1/1. Its function is as follows. Converts heme B (protoheme IX) to heme O by substitution of the vinyl group on carbon 2 of heme B porphyrin ring with a hydroxyethyl farnesyl side group. The polypeptide is Protoheme IX farnesyltransferase (Escherichia coli O139:H28 (strain E24377A / ETEC)).